The sequence spans 442 residues: HTH-type transcriptional regulator NorG (442 aa).

The region spanning 2 to 46 (KIPSQRQLAIQYNVNRVTIIKSIELLEAEGFIYTKVGSGTYVNDY) is the HTH gntR-type domain. The segment at residues 6 to 25 (QRQLAIQYNVNRVTIIKSIE) is a DNA-binding region (H-T-H motif). Lysine 288 carries the post-translational modification N6-(pyridoxal phosphate)lysine.

It in the C-terminal section; belongs to the class-I pyridoxal-phosphate-dependent aminotransferase family. The cofactor is pyridoxal 5'-phosphate.

Positively regulates the expression of the NorB efflux pump and negatively regulates the expression of the AbcA efflux pump. Binds specifically to the promoters of norA, norB and norC and abcA genes. Could also have an aminotransferase activity. This Staphylococcus aureus (strain bovine RF122 / ET3-1) protein is HTH-type transcriptional regulator NorG (norG).